A 143-amino-acid chain; its full sequence is Competence protein ComGD (143 aa).

Positions 1–10 (MNIKLNEEKG) are excised as a propeptide. Residue Phe-11 is modified to N-methylphenylalanine. A helical transmembrane segment spans residues 11–31 (FTLLESLLVLSLASILLVAVF).

As to quaternary structure, the transformation pili are flexible filaments, consisting mainly of the major pilin ComGC and smaller amounts of the minor pilins, including at least ComGD, ComGF and ComGG. Interacts with ComGF. Interacts with ComGG. In terms of processing, processing of ComGD in competent cells requires ComC.

The protein localises to the cell membrane. It is found in the cell surface. Its function is as follows. Required for formation of the type IV-like pilus (T4P) that plays a role in transformation. Transformation pili are dynamically extended and retracted, perhaps thereby promoting DNA uptake and transformation. Required for transformation and DNA binding. The protein is Competence protein ComGD (comGD) of Bacillus subtilis (strain 168).